A 598-amino-acid polypeptide reads, in one-letter code: Mitochondrial distribution and morphology protein 30 (598 aa).

An F-box domain is found at 13–59 (SFTIDHLPPEIWLCISKLVGTSDLHNLCLINRRLYLTITSDEIWKRR).

As to quaternary structure, interacts with SKP1. Component of the probable SCF(MDM30) complex containing CDC53, SKP1, RBX1 and MDM30. Interacts with SKP1 and FZO1.

It is found in the cytoplasm. The protein localises to the mitochondrion. It participates in protein modification; protein ubiquitination. Its function is as follows. Substrate recognition component of a SCF (SKP1-CUL1-F-box protein) E3 ubiquitin-protein ligase complex which mediates the ubiquitination and subsequent proteasomal degradation of target proteins. Probably recognizes and binds to phosphorylated target proteins. Recognizes FZO1 and regulates the amount of FZO1. Regulatory factor for the mitochondrial fusion machinery. Required for mitochondrial DNA maintenance. The sequence is that of Mitochondrial distribution and morphology protein 30 (MDM30) from Saccharomyces cerevisiae (strain ATCC 204508 / S288c) (Baker's yeast).